The following is a 393-amino-acid chain: MAFKLNIGLLALSLSLSLVHLDGVRAGMATRYWDCCLASASWEGKAPVYAPVDACKADGVTLIDSKKDPSGQSGCNGGNKFMCSCMQPFDDETDPTLAFGFGAFTTGQESDTDCACFYAEFEHDAQGKAMKRNKLIFQVTNVGGDVQSQNFDFQIPGGGLGAFPKGCPAQWGVEASLWGDQYGGVKSATECSKLPKPLQEGCKWRFSEWGDNPVLKGSPKRVKCPKSLIDRSGCQRKDDNTISPYSGKVDSANTAAPAQYKRDRSVCLAGGKKGKSAAGGVDGSGDASGGADASGAGGAAEGSQGQPEGYGQPSGGNDQGSSNGDATTGAGSGSGSDSGSTANGSGSGAPTSGSDGSAVAPPSGGSNPGAAQGGQGGAQPGPSGGHKKCHKKH.

The N-terminal stretch at 1-26 (MAFKLNIGLLALSLSLSLVHLDGVRA) is a signal peptide. The Nucleophile role is filled by D34. D152 acts as the Proton donor in catalysis. Positions 233 to 393 (GCQRKDDNTI…GGHKKCHKKH (161 aa)) are disordered. 2 stretches are compositionally biased toward low complexity: residues 319-329 (QGSSNGDATTG) and 337-370 (DSGS…NPGA). N-linked (GlcNAc...) asparagine glycosylation occurs at N343. Residues 371 to 384 (AQGGQGGAQPGPSG) are compositionally biased toward gly residues.

The protein belongs to the glycosyl hydrolase 45 (cellulase K) family. In terms of processing, may also be O-glycosylated. As to expression, hyphal tip.

It is found in the secreted. The catalysed reaction is Endohydrolysis of (1-&gt;4)-beta-D-glucosidic linkages in cellulose, lichenin and cereal beta-D-glucans.. This chain is Endoglucanase 1 (EGL1), found in Mycosarcoma maydis (Corn smut fungus).